Consider the following 205-residue polypeptide: GTP cyclohydrolase-2 (205 aa).

49–53 contacts GTP; that stretch reads RLHSE. Residues Cys54, Cys65, and Cys67 each coordinate Zn(2+). Residues Gln70, 92–94, and Thr114 contribute to the GTP site; that span reads EGR. Asp126 (proton acceptor) is an active-site residue. The active-site Nucleophile is Arg128. GTP is bound by residues Thr149 and Lys154.

It belongs to the GTP cyclohydrolase II family. It depends on Zn(2+) as a cofactor.

It catalyses the reaction GTP + 4 H2O = 2,5-diamino-6-hydroxy-4-(5-phosphoribosylamino)-pyrimidine + formate + 2 phosphate + 3 H(+). The protein operates within cofactor biosynthesis; riboflavin biosynthesis; 5-amino-6-(D-ribitylamino)uracil from GTP: step 1/4. In terms of biological role, catalyzes the conversion of GTP to 2,5-diamino-6-ribosylamino-4(3H)-pyrimidinone 5'-phosphate (DARP), formate and pyrophosphate. This chain is GTP cyclohydrolase-2, found in Pseudomonas paraeruginosa (strain DSM 24068 / PA7) (Pseudomonas aeruginosa (strain PA7)).